Reading from the N-terminus, the 2082-residue chain is Probable ATP-dependent helicase PF08_0048 (2082 aa).

The HSA domain maps to 66 to 138; sequence KIVEPAKTPE…EEKRLKLYSK (73 aa). Over residues 209–221 the composition is skewed to low complexity; that stretch reads NNSEIVNNNASSV. Disordered stretches follow at residues 209-234 and 301-470; these read NNSE…DDLT and NVIE…SPTR. Composition is skewed to basic and acidic residues over residues 419–448 and 455–465; these read NSDH…HIDN and TGEDYKSDKEN. A coiled-coil region spans residues 476 to 531; sequence KKEKYDEYDTKLKIEKREEENKNYEKDEHEYESDNYDKEKINKKKELILLKNDIEN. Residues 532-641 are disordered; it reads DSDETSEHIK…KNDSDDNDDI (110 aa). Basic and acidic residues predominate over residues 536–545; sequence TSEHIKRDSR. Residues 579–598 are compositionally biased toward low complexity; sequence DNNNSENDNNNDNNNDNNND. The segment covering 599–627 has biased composition (acidic residues); it reads NNDDNNDDNNDDNNDDNNDDNNDDNNDDN. Residues 674-839 form the Helicase ATP-binding domain; it reads LYLYKNNING…WSLLHFLMPN (166 aa). 687–694 is an ATP binding site; it reads DEMGLGKT. Residues 790–793 carry the DEAH box motif; the sequence is DEAH. A disordered region spans residues 1199-1255; it reads EQNNNNSKDNNNNIDNNNNIDNNNNIDNNNNIDNNNNIDNNNNNIDNNNNIDNHHNN. In terms of domain architecture, Helicase C-terminal spans 1772–1922; that stretch reads ALEKLLSKCK…NICINMGNFN (151 aa). The stretch at 1972-2060 forms a coiled coil; that stretch reads EQVENKDKMN…DEMRMKIEIE (89 aa).

This sequence belongs to the SNF2/RAD54 helicase family. SWR1 subfamily. In terms of assembly, component of a chromatin-remodeling complex.

It localises to the nucleus. In terms of biological role, catalytic component of a chromatin remodeling complex. The protein is Probable ATP-dependent helicase PF08_0048 of Plasmodium falciparum (isolate 3D7).